We begin with the raw amino-acid sequence, 507 residues long: Phosphoprotein (507 aa).

Positions Met-1–Ala-48 are interaction with N0. Disordered regions lie at residues Ser-40 to Leu-100, Gly-134 to Tyr-163, Asn-201 to Thr-232, Gly-250 to Pro-273, and Trp-285 to Asp-309. Ser-86 is modified (phosphoserine). The segment covering Gly-134–Asp-145 has biased composition (low complexity). Acidic residues predominate over residues Asn-146–Thr-160. The residue at position 151 (Ser-151) is a Phosphoserine. Low complexity predominate over residues Ser-260 to Gly-270. The span at Thr-286–Glu-301 shows a compositional bias: polar residues. The segment at Gly-304–Gly-376 is multimerization. Asp-314 serves as a coordination point for Ca(2+). Interaction with the L polymerase regions lie at residues Ser-361–Leu-377 and Pro-396–Leu-410. Positions Gly-457–Lys-507 are x domain (XD). The interaction with the nucleocapsid (N-RNA) stretch occupies residues Ala-459–Lys-507.

This sequence belongs to the morbillivirus P protein family. As to quaternary structure, homotetramer. Interacts (via multimerization domain and XD domain) with polymerase L; this interaction forms the polymerase L-P complex. Interacts (via N-terminus) with N0 (via Ncore); this interaction allows P to chaperon N0 to avoid N polymerization and non-specific RNA binding before encapsidation. Interacts (via C-terminus) with N-RNA template (via Ntail); this interaction maintains the P/L complex anchored to the nucleocapsid template during the sequential transcription. Interacts (via C-terminus) with protein C this interaction allows C to associate with the ribonucleocapsid. In terms of processing, phosphorylation on serines by host CK2 is necessary for the formation of viral factories.

In terms of biological role, essential cofactor of the RNA polymerase L that plays a central role in the transcription and replication by forming the polymerase complex with RNA polymerase L and recruiting L to the genomic N-RNA template for RNA synthesis. Also plays a central role in the encapsidation of nascent RNA chains by forming the encapsidation complex with the nucleocapsid protein N (N-P complex). Acts as a chaperone for newly synthesized free N protein, so-called N0, allowing encapsidation of nascent RNA chains during replication. The nucleoprotein protein N prevents excessive phosphorylation of P, which leads to down-regulation of viral transcription/ replication. Participates, together with N, in the formation of viral factories (viroplasms), which are large inclusions in the host cytoplasm where replication takes place. This is Phosphoprotein (P/V) from Measles virus (strain Edmonston B) (MeV).